Here is a 346-residue protein sequence, read N- to C-terminus: UDP-N-acetylenolpyruvoylglucosamine reductase (346 aa).

An FAD-binding PCMH-type domain is found at 18–189 (LHAQARAFIA…VSVVFALKTH (172 aa)). The active site involves R165. S240 serves as the catalytic Proton donor. Residue E336 is part of the active site.

It belongs to the MurB family. FAD serves as cofactor.

The protein resides in the cytoplasm. The enzyme catalyses UDP-N-acetyl-alpha-D-muramate + NADP(+) = UDP-N-acetyl-3-O-(1-carboxyvinyl)-alpha-D-glucosamine + NADPH + H(+). It participates in cell wall biogenesis; peptidoglycan biosynthesis. In terms of biological role, cell wall formation. In Neisseria gonorrhoeae (strain ATCC 700825 / FA 1090), this protein is UDP-N-acetylenolpyruvoylglucosamine reductase.